Here is a 496-residue protein sequence, read N- to C-terminus: Cytochrome P450 71D95 (496 aa).

Residues 2 to 22 traverse the membrane as a helical; Signal-anchor segment; the sequence is ELQISSAIIILVATFVASLLI. C436 provides a ligand contact to heme.

It belongs to the cytochrome P450 family. Heme is required as a cofactor.

It localises to the endoplasmic reticulum membrane. The catalysed reaction is (4S)-limonene + reduced [NADPH--hemoprotein reductase] + O2 = (1S,6R)-isopiperitenol + oxidized [NADPH--hemoprotein reductase] + H2O + H(+). Hydroxylates both (+)- and (-)-limonene to (+) and (-)-trans-isopiperitenol. The chain is Cytochrome P450 71D95 (CYP71D95) from Mentha spicata (Spearmint).